Reading from the N-terminus, the 1112-residue chain is DNA polymerase II large subunit (1112 aa).

The protein belongs to the archaeal DNA polymerase II family. As to quaternary structure, heterodimer of a large subunit and a small subunit.

It catalyses the reaction DNA(n) + a 2'-deoxyribonucleoside 5'-triphosphate = DNA(n+1) + diphosphate. The catalysed reaction is Exonucleolytic cleavage in the 3'- to 5'-direction to yield nucleoside 5'-phosphates.. Its function is as follows. Possesses two activities: a DNA synthesis (polymerase) and an exonucleolytic activity that degrades single-stranded DNA in the 3'- to 5'-direction. Has a template-primer preference which is characteristic of a replicative DNA polymerase. The chain is DNA polymerase II large subunit from Cenarchaeum symbiosum (strain A).